Here is a 270-residue protein sequence, read N- to C-terminus: 3-phenylpropionate-dihydrodiol/cinnamic acid-dihydrodiol dehydrogenase (270 aa).

NAD(+) is bound at residue 10–34; sequence FITGGGSGLGLALVERFIEEGAQVA. Ser-143 contacts substrate. Tyr-156 (proton acceptor) is an active-site residue.

This sequence belongs to the short-chain dehydrogenases/reductases (SDR) family.

It carries out the reaction 3-(cis-5,6-dihydroxycyclohexa-1,3-dien-1-yl)propanoate + NAD(+) = 3-(2,3-dihydroxyphenyl)propanoate + NADH + H(+). The enzyme catalyses (2E)-3-(cis-5,6-dihydroxycyclohexa-1,3-dien-1-yl)prop-2-enoate + NAD(+) = (2E)-3-(2,3-dihydroxyphenyl)prop-2-enoate + NADH + H(+). The protein operates within aromatic compound metabolism; 3-phenylpropanoate degradation. Its function is as follows. Converts 3-phenylpropionate-dihydrodiol (PP-dihydrodiol) and cinnamic acid-dihydrodiol (CI-dihydrodiol) into 3-(2,3-dihydroxylphenyl)propanoic acid (DHPP) and 2,3-dihydroxicinnamic acid (DHCI), respectively. The polypeptide is 3-phenylpropionate-dihydrodiol/cinnamic acid-dihydrodiol dehydrogenase (Shigella sonnei (strain Ss046)).